The following is a 694-amino-acid chain: ATP-dependent RNA helicase DHX33 (694 aa).

In terms of domain architecture, Helicase ATP-binding spans 78 to 246; it reads LKELEANDTV…FNCKGMYLEG (169 aa). An ATP-binding site is contributed by 91 to 98; the sequence is SETGSGKT. The short motif at 188 to 191 is the DEAH box element; that stretch reads DEAH. The Helicase C-terminal domain maps to 270-443; that stretch reads TLFHIHRTTP…SMVLQLLALD (174 aa).

The protein belongs to the DEAD box helicase family. DEAH subfamily.

Its subcellular location is the nucleus. It is found in the nucleolus. The catalysed reaction is ATP + H2O = ADP + phosphate + H(+). Part of a translational control module, also containing pths/DDX47 and ais/DDX52, which coordinates germline stem cell differentiation with ribosome biogenesis during oogenesis. This module allows for coregulation of ribosomal proteins and non1/GTPBP4, a p53 repressor, preventing p53 stabilization, cell cycle arrest and loss of stem cell differentiation. This chain is ATP-dependent RNA helicase DHX33, found in Drosophila melanogaster (Fruit fly).